Consider the following 403-residue polypeptide: Imidazolonepropionase (403 aa).

His69 and His71 together coordinate Fe(3+). Residues His69 and His71 each coordinate Zn(2+). 4-imidazolone-5-propanoate-binding residues include Arg78, Tyr141, and His174. Tyr141 is an N-formimidoyl-L-glutamate binding site. His239 contributes to the Fe(3+) binding site. Zn(2+) is bound at residue His239. Gln242 contributes to the 4-imidazolone-5-propanoate binding site. Position 314 (Asp314) interacts with Fe(3+). Asp314 contacts Zn(2+). N-formimidoyl-L-glutamate-binding residues include Asn316 and Gly318. Residue Ser319 participates in 4-imidazolone-5-propanoate binding.

The protein belongs to the metallo-dependent hydrolases superfamily. HutI family. Zn(2+) is required as a cofactor. Fe(3+) serves as cofactor.

It localises to the cytoplasm. It catalyses the reaction 4-imidazolone-5-propanoate + H2O = N-formimidoyl-L-glutamate. It participates in amino-acid degradation; L-histidine degradation into L-glutamate; N-formimidoyl-L-glutamate from L-histidine: step 3/3. In terms of biological role, catalyzes the hydrolytic cleavage of the carbon-nitrogen bond in imidazolone-5-propanoate to yield N-formimidoyl-L-glutamate. It is the third step in the universal histidine degradation pathway. This is Imidazolonepropionase from Legionella pneumophila (strain Paris).